A 62-amino-acid polypeptide reads, in one-letter code: Large ribosomal subunit protein bL32 (62 aa).

The protein belongs to the bacterial ribosomal protein bL32 family.

This is Large ribosomal subunit protein bL32 (rpmF) from Treponema pallidum (strain Nichols).